The sequence spans 263 residues: Purine nucleoside phosphorylase SAR1163 (263 aa).

Zn(2+) is bound by residues H79, C124, and H141.

It belongs to the purine nucleoside phosphorylase YfiH/LACC1 family. Homodimer. Cu(2+) serves as cofactor. Requires Zn(2+) as cofactor.

The enzyme catalyses adenosine + phosphate = alpha-D-ribose 1-phosphate + adenine. It carries out the reaction S-methyl-5'-thioadenosine + phosphate = 5-(methylsulfanyl)-alpha-D-ribose 1-phosphate + adenine. The catalysed reaction is inosine + phosphate = alpha-D-ribose 1-phosphate + hypoxanthine. It catalyses the reaction adenosine + H2O + H(+) = inosine + NH4(+). In terms of biological role, purine nucleoside enzyme that catalyzes the phosphorolysis of adenosine and inosine nucleosides, yielding D-ribose 1-phosphate and the respective free bases, adenine and hypoxanthine. Also catalyzes the phosphorolysis of S-methyl-5'-thioadenosine into adenine and S-methyl-5-thio-alpha-D-ribose 1-phosphate. Also has adenosine deaminase activity. In Staphylococcus aureus (strain MRSA252), this protein is Purine nucleoside phosphorylase SAR1163.